Here is a 204-residue protein sequence, read N- to C-terminus: Holliday junction branch migration complex subunit RuvA (204 aa).

A domain I region spans residues 1-67 (MIDYLYGTLD…GGVISLYGFF (67 aa)). Residues 68-149 (TIEEREMYLL…TVNVLNKEKQ (82 aa)) form a domain II region. The interval 150–154 (TGAET) is flexible linker. The tract at residues 155–204 (IKNTMVSEAIAGLITLGYKMQQARVAVTNVYEHNENITLEDLIKKSLQYL) is domain III.

The protein belongs to the RuvA family. As to quaternary structure, homotetramer. Forms an RuvA(8)-RuvB(12)-Holliday junction (HJ) complex. HJ DNA is sandwiched between 2 RuvA tetramers; dsDNA enters through RuvA and exits via RuvB. An RuvB hexamer assembles on each DNA strand where it exits the tetramer. Each RuvB hexamer is contacted by two RuvA subunits (via domain III) on 2 adjacent RuvB subunits; this complex drives branch migration. In the full resolvosome a probable DNA-RuvA(4)-RuvB(12)-RuvC(2) complex forms which resolves the HJ.

It is found in the cytoplasm. In terms of biological role, the RuvA-RuvB-RuvC complex processes Holliday junction (HJ) DNA during genetic recombination and DNA repair, while the RuvA-RuvB complex plays an important role in the rescue of blocked DNA replication forks via replication fork reversal (RFR). RuvA specifically binds to HJ cruciform DNA, conferring on it an open structure. The RuvB hexamer acts as an ATP-dependent pump, pulling dsDNA into and through the RuvAB complex. HJ branch migration allows RuvC to scan DNA until it finds its consensus sequence, where it cleaves and resolves the cruciform DNA. The chain is Holliday junction branch migration complex subunit RuvA from Endomicrobium trichonymphae.